The primary structure comprises 54 residues: Large ribosomal subunit protein bL33 (54 aa).

The protein belongs to the bacterial ribosomal protein bL33 family.

The sequence is that of Large ribosomal subunit protein bL33 from Corynebacterium urealyticum (strain ATCC 43042 / DSM 7109).